The primary structure comprises 30 residues: Sillucin (30 aa).

Cystine bridges form between Cys-2/Cys-7, Cys-12/Cys-24, Cys-13/Cys-30, and Cys-14/Cys-21.

Its subcellular location is the secreted. Its function is as follows. Sillucin is an antimicrobial agent produced by the thermophilic fungus Rhizomucor pusillus in liquid culture; it is effective against Gram-positive bacteria at the level of RNA metabolism. This is Sillucin from Rhizomucor pusillus.